The following is a 51-amino-acid chain: Large ribosomal subunit protein eL39 (51 aa).

The tract at residues 32 to 51 (KRRVTRSPARRHWRRQKLKA) is disordered.

Belongs to the eukaryotic ribosomal protein eL39 family.

The sequence is that of Large ribosomal subunit protein eL39 from Pyrobaculum calidifontis (strain DSM 21063 / JCM 11548 / VA1).